The chain runs to 269 residues: Probable aquaporin TIP5-1 (269 aa).

5 consecutive transmembrane segments (helical) span residues 19-39 (AYFA…GSTI), 54-74 (SLMA…FIAA), 84-104 (AVTF…IFYW), 139-159 (FGAG…VHVA), and 177-197 (ALGA…AGSL). Positions 82-84 (NPA) match the NPA 1 motif. An NPA 2 motif is present at residues 203–205 (NPA). The helical transmembrane segment at 223–243 (YWAGPMVGAAVAALVHQALVF) threads the bilayer.

This sequence belongs to the MIP/aquaporin (TC 1.A.8) family. TIP (TC 1.A.8.10) subfamily. Expressed in leaves and anthers, and at lower levels in roots.

It is found in the vacuole membrane. In terms of biological role, aquaporins facilitate the transport of water and small neutral solutes across cell membranes. May be involved in transport from the vacuolar compartment to the cytoplasm. The chain is Probable aquaporin TIP5-1 (TIP5;1) from Oryza sativa subsp. japonica (Rice).